The primary structure comprises 595 residues: MVLMMESQCEYFMYFPAVPISDLSDPAKYRTLPRRSHLYLGETVRFLLVLRSQSASGSSDGSCGSEQHSSRSWRELAGSLSAVASVSPGDSRQRTQPLYHDYHSSGDECVEDTDEDDAAEAVGCPGRGGPRYRGFRECKPLLIHNNPGNGVREFRRAPVQSPVDEPVVLSDEVIFPLTVSLDKLPVNTLKVKIIVTVWKQEEEKAEIQEHGYLSILQQKSPCQTFRQDLNTFKAQVSTTLNVLPPPTVKCQQMTVSGRHLTVLKVLNGSSQEEVCVRDVKILPNFNASYLPMMPDGSVLLVDNVCHQSGEVAMASFYRMDSESSHLPSMLSALEEQNFLFQLQLNNQPQDDSNEGLEVPLVAVLQWSTSKLPFTNSIYTHYSLPSIRLDRPRFIMTASCPSAVRTRENFRVRYTLLNNLQDFLAVRLVWTPEGRGQKEDPAVNAVVCHSPLSNLGYCRKGSTLSVSVAFQILRAGLFELSQHMKLKLQFTASVSNPPPDARPLSRKNSPSSPAVRDILDRHQASLSLGRSQSFSHQQPSKFHLTRTGSVMERRAITPPVGSPVGRPLYLPPDRNILSLDKIAKRECKVLVLDSHN.

Disordered stretches follow at residues 84–111 and 494–513; these read ASVSPGDSRQRTQPLYHDYHSSGDECVE and SNPPPDARPLSRKNSPSSPA.

Component of the multisubunit TRAPP II complex, which includes at least TRAPPC1, TRAPPC2, TRAPPC2L, TRAPPC3, TRAPPC4, TRAPPC5, TRAPPC6A/B, TRAPPC9, TRAPPC10 and TRAPPC14. TRAPPC9, TRAPPC10 and TRAPPC14 are specific subunits of the TRAPP II complex. Interacts with alpha-tubulin during mitosis.

It is found in the cytoplasm. It localises to the cytoskeleton. Its subcellular location is the spindle. The protein localises to the vesicle. The protein resides in the midbody. Functionally, specific subunit of the TRAPP (transport protein particle) II complex, a highly conserved vesicle tethering complex that functions in late Golgi trafficking as a membrane tether. TRAPP II complex also has GEF activity toward RAB1A. TRAPPC14 is required for ciliogenesis. In Danio rerio (Zebrafish), this protein is Trafficking protein particle complex subunit 14 (trappc14).